Here is an 88-residue protein sequence, read N- to C-terminus: Small ribosomal subunit protein uS15c (88 aa).

The protein belongs to the universal ribosomal protein uS15 family. In terms of assembly, part of the 30S ribosomal subunit.

The protein localises to the plastid. The protein resides in the chloroplast. The chain is Small ribosomal subunit protein uS15c (rps15) from Angiopteris evecta (Mule's foot fern).